The sequence spans 479 residues: Spindly-like protein spdl-1 (479 aa).

Coiled coils occupy residues 4–180 (DEEK…EGEL), 210–250 (EEDL…RFNV), and 321–357 (LMKDNEKYVTIIRGLQQEVENLKADIVQLQFDNKCAH).

In terms of assembly, interacts with Zwilch homolog zwl-1, a component of the RZZ complex. Interacts with mdf-1 and mdf-2.

It is found in the chromosome. The protein resides in the centromere. It localises to the kinetochore. Its subcellular location is the cytoplasm. The protein localises to the cytoskeleton. It is found in the spindle pole. In terms of biological role, transient kinetochore component required for chromosome and spindle pole alignment and chromosome segregation during mitosis. Functions downstream of the RZZ complex to mediate kinetochore-microtubule attachments and nuclear envelope breakdown during cell division. Required for kinetochore assembly and localizes the checkpoint proteins mdf-1 and mdf-2, dynein and dynactin to unattached kinetochores. Dynein is believed to control the initial lateral interaction between the kinetochore and spindle microtubules and to facilitate the subsequent formation of end-on kinetochore-microtubule attachments mediated by the NDC80 complex. Required for embryonic development. The chain is Spindly-like protein spdl-1 from Caenorhabditis elegans.